A 179-amino-acid polypeptide reads, in one-letter code: Cytochrome c-type biogenesis protein CcmE (179 aa).

At 1–8 the chain is on the cytoplasmic side; sequence MTPRRKSR. Residues 9-29 form a helical; Signal-anchor for type II membrane protein membrane-spanning segment; it reads MTVILFVLLGISIASALVLYA. At 30–179 the chain is on the periplasmic side; that stretch reads LRQNIDLFYT…QKTSMQEGQK (150 aa). 2 residues coordinate heme: His-131 and Tyr-135. The disordered stretch occupies residues 151-179; sequence MGVADLKGESERDRQEKAYQKTSMQEGQK. Residues 156–169 are compositionally biased toward basic and acidic residues; sequence LKGESERDRQEKAY. Residues 170 to 179 are compositionally biased toward polar residues; the sequence is QKTSMQEGQK.

It belongs to the CcmE/CycJ family.

The protein localises to the cell inner membrane. In terms of biological role, heme chaperone required for the biogenesis of c-type cytochromes. Transiently binds heme delivered by CcmC and transfers the heme to apo-cytochromes in a process facilitated by CcmF and CcmH. The chain is Cytochrome c-type biogenesis protein CcmE from Pasteurella multocida (strain Pm70).